Reading from the N-terminus, the 152-residue chain is Deoxyuridine 5'-triphosphate nucleotidohydrolase (152 aa).

Substrate contacts are provided by residues 71 to 73 (RSG), Asn84, and 88 to 90 (TID).

This sequence belongs to the dUTPase family. It depends on Mg(2+) as a cofactor.

The enzyme catalyses dUTP + H2O = dUMP + diphosphate + H(+). It functions in the pathway pyrimidine metabolism; dUMP biosynthesis; dUMP from dCTP (dUTP route): step 2/2. Its function is as follows. This enzyme is involved in nucleotide metabolism: it produces dUMP, the immediate precursor of thymidine nucleotides and it decreases the intracellular concentration of dUTP so that uracil cannot be incorporated into DNA. The protein is Deoxyuridine 5'-triphosphate nucleotidohydrolase of Roseobacter denitrificans (strain ATCC 33942 / OCh 114) (Erythrobacter sp. (strain OCh 114)).